The primary structure comprises 347 residues: 4-hydroxy-3-methylbut-2-en-1-yl diphosphate synthase (flavodoxin) (347 aa).

Residues C259, C262, C294, and E301 each contribute to the [4Fe-4S] cluster site.

This sequence belongs to the IspG family. It depends on [4Fe-4S] cluster as a cofactor.

It catalyses the reaction (2E)-4-hydroxy-3-methylbut-2-enyl diphosphate + oxidized [flavodoxin] + H2O + 2 H(+) = 2-C-methyl-D-erythritol 2,4-cyclic diphosphate + reduced [flavodoxin]. It participates in isoprenoid biosynthesis; isopentenyl diphosphate biosynthesis via DXP pathway; isopentenyl diphosphate from 1-deoxy-D-xylulose 5-phosphate: step 5/6. Converts 2C-methyl-D-erythritol 2,4-cyclodiphosphate (ME-2,4cPP) into 1-hydroxy-2-methyl-2-(E)-butenyl 4-diphosphate. The chain is 4-hydroxy-3-methylbut-2-en-1-yl diphosphate synthase (flavodoxin) from Caldicellulosiruptor saccharolyticus (strain ATCC 43494 / DSM 8903 / Tp8T 6331).